Consider the following 209-residue polypeptide: Ribonuclease HII (209 aa).

The region spanning 18 to 209 is the RNase H type-2 domain; sequence GLVAGVDEVG…FKPVKALLER (192 aa). A divalent metal cation contacts are provided by D24, E25, and D116.

This sequence belongs to the RNase HII family. The cofactor is Mn(2+). Requires Mg(2+) as cofactor.

Its subcellular location is the cytoplasm. The catalysed reaction is Endonucleolytic cleavage to 5'-phosphomonoester.. Its function is as follows. Endonuclease that specifically degrades the RNA of RNA-DNA hybrids. This chain is Ribonuclease HII, found in Shewanella sp. (strain MR-7).